A 103-amino-acid polypeptide reads, in one-letter code: U-scoloptoxin(24)-Er1a (103 aa).

An N-terminal signal peptide occupies residues Met-1–Gly-23.

The protein belongs to the scoloptoxin-24 family. Contains 1 disulfide bond. Expressed by the venom gland.

Its subcellular location is the secreted. The protein is U-scoloptoxin(24)-Er1a of Ethmostigmus rubripes (Giant centipede).